Reading from the N-terminus, the 698-residue chain is Polyribonucleotide nucleotidyltransferase (698 aa).

Mg(2+)-binding residues include aspartate 490 and aspartate 496. A KH domain is found at 558–617 (PVIYTMRIPQDKIGALIGPGGKNIKRITETTDTKIDINDDGVVQIAAVNGDKLAMAKAEI). One can recognise an S1 motif domain in the interval 627 to 695 (NKIYKGKVVS…NNGKVRLSRK (69 aa)).

This sequence belongs to the polyribonucleotide nucleotidyltransferase family. It depends on Mg(2+) as a cofactor.

The protein localises to the cytoplasm. It catalyses the reaction RNA(n+1) + phosphate = RNA(n) + a ribonucleoside 5'-diphosphate. Functionally, involved in mRNA degradation. Catalyzes the phosphorolysis of single-stranded polyribonucleotides processively in the 3'- to 5'-direction. In Elusimicrobium minutum (strain Pei191), this protein is Polyribonucleotide nucleotidyltransferase.